We begin with the raw amino-acid sequence, 482 residues long: Lipoamide acyltransferase component of branched-chain alpha-keto acid dehydrogenase complex, mitochondrial (482 aa).

A mitochondrion-targeting transit peptide spans 1-61 (MAAVRMLRTW…HFLKTTAALR (61 aa)). In terms of domain architecture, Lipoyl-binding spans 64-139 (VVQFKLSDIG…YVGKPLVDIE (76 aa)). The residue at position 105 (Lys105) is an N6-lipoyllysine. An N6-succinyllysine modification is found at Lys133. Positions 145 to 160 (DSEEDVVETPAVSHDE) are critical for association with PPM1K. Positions 147–168 (EEDVVETPAVSHDEHTHQEIKG) are disordered. Basic and acidic residues predominate over residues 157–168 (SHDEHTHQEIKG). The Peripheral subunit-binding (PSBD) domain occupies 172-209 (LATPAVRRLAMENNIKLSEVVGSGKDGRILKEDILNYL). Lys196 carries the N6-acetyllysine; alternate modification. Lys196 bears the N6-succinyllysine; alternate mark. Lys202 carries the N6-acetyllysine modification. A Phosphoserine modification is found at Ser220. 2 positions are modified to N6-acetyllysine: Lys243 and Lys250. Position 261 is an N6-succinyllysine (Lys261). Lys289 carries the N6-acetyllysine; alternate modification. The residue at position 289 (Lys289) is an N6-succinyllysine; alternate. Residue Arg291 participates in CoA binding. Lys295 and Lys304 each carry N6-acetyllysine. Positions 306, 349, 378, 399, 400, 403, 424, and 426 each coordinate CoA. Residue Lys435 is modified to N6-acetyllysine. At Lys440 the chain carries N6-acetyllysine; alternate. Lys440 is modified (N6-succinyllysine; alternate). Catalysis depends on residues His452 and Asp456.

Belongs to the 2-oxoacid dehydrogenase family. In terms of assembly, forms a 24-polypeptide structural core with octahedral symmetry that represents the E2 component of the branched-chain alpha-ketoacid dehydrogenase (BCKDH) complex. The BCKDH complex is composed of three major building blocks E1, E2 and E3. It is organized around E2, a 24-meric cubic core composed of DBT, to which are associated 6 to 12 copies of E1, and approximately 6 copies of the dehydrogenase E3, a DLD dimer. Interacts with PPM1K with a 24:1 stoichiometry; the N-terminal region (residues 49-61) of PPM1K and C-terminal linker of the lipoyl domain of DBT/E2 (residues 145-160) are critical for this interaction whereas the lipoyl prosthetic group is dispensable. This interaction requires colocalization in mitochondria. PPM1K competes with BCKDK for binding to DBT; this interaction is modulated by branched-chain alpha-keto acids (BCKAs). At steady state, BCKDH holoenzyme preferentially binds BCKDK and BCKDHA is phosphorylated. In response to high levels of BCKAs, BCKDK is replaced by PPM1K leading to BCKDHA dephosphorylation. (R)-lipoate serves as cofactor.

It localises to the mitochondrion matrix. It catalyses the reaction N(6)-[(R)-dihydrolipoyl]-L-lysyl-[protein] + 2-methylpropanoyl-CoA = N(6)-[(R)-S(8)-2-methylpropanoyldihydrolipoyl]-L-lysyl-[protein] + CoA. The branched-chain alpha-keto dehydrogenase complex catalyzes the overall conversion of alpha-keto acids to acyl-CoA and CO(2). It contains multiple copies of three enzymatic components: branched-chain alpha-keto acid decarboxylase (E1), lipoamide acyltransferase (E2) and lipoamide dehydrogenase (E3). Within this complex, the catalytic function of this enzyme is to accept, and to transfer to coenzyme A, acyl groups that are generated by the branched-chain alpha-keto acid decarboxylase component. In Homo sapiens (Human), this protein is Lipoamide acyltransferase component of branched-chain alpha-keto acid dehydrogenase complex, mitochondrial.